A 132-amino-acid chain; its full sequence is Small ribosomal subunit protein uS8 (132 aa).

This sequence belongs to the universal ribosomal protein uS8 family. As to quaternary structure, part of the 30S ribosomal subunit. Contacts proteins S5 and S12.

One of the primary rRNA binding proteins, it binds directly to 16S rRNA central domain where it helps coordinate assembly of the platform of the 30S subunit. This Mycoplasmopsis synoviae (strain 53) (Mycoplasma synoviae) protein is Small ribosomal subunit protein uS8.